Consider the following 292-residue polypeptide: uncharacterized protein (292 aa).

This is an uncharacterized protein from Acanthamoeba polyphaga (Amoeba).